The following is a 575-amino-acid chain: Centrosomal protein POC5 (575 aa).

Residues 1-26 (MSSDEEKYSLPVVQNDSSRGSSVSSN) form a disordered region. Phosphoserine is present on residues S105 and S109. Residues 142-173 (HEILVSDFLVSDENLQKMENVLDLWSSGLKTN) form a Centrin-binding (CBR) 1 repeat. Positions 191–222 (MEMRKEKEKHAAHLKQLCNQINELKELQKTFE) form a coiled coil. Centrin-binding (CBR) repeat units lie at residues 231 to 262 (VISS…HVRA) and 263 to 295 (RQDV…VQKQ). Residues 316–355 (SNDYEAKVAMLSGALENAKAEIQRMQHEKEHFEDSMKKAF) are a coiled coil. 2 disordered regions span residues 376–411 (AGID…MPLP) and 538–575 (KYPR…KVVD). The span at 382 to 400 (NNKKEEYGPGVQGKEHSAH) shows a compositional bias: basic and acidic residues. N6-acetyllysine is present on K538. A compositionally biased stretch (polar residues) spans 545–569 (PESSTSASRSLGTRSAHTQSLTSVH). S564 carries the phosphoserine modification.

It belongs to the POC5 family. In terms of assembly, interacts with CETN2 and CETN3. Forms a microtubule-associated complex with POC1B, CETN2 and FAM161A. Interacts with CCDC15. In terms of processing, hyperphosphorylated during recruitment to procentrioles in G2/M phase.

It is found in the cytoplasm. The protein resides in the cytoskeleton. Its subcellular location is the microtubule organizing center. The protein localises to the centrosome. It localises to the centriole. Essential for the assembly of the distal half of centrioles, required for centriole elongation. Acts as a negative regulator of centriole elongation. The chain is Centrosomal protein POC5 (POC5) from Homo sapiens (Human).